A 218-amino-acid polypeptide reads, in one-letter code: Glutathione S-transferase Mu 2 (218 aa).

Residues 2 to 88 (PMTLGYWDIR…YLARKHNLCG (87 aa)) enclose the GST N-terminal domain. Position 7–8 (7–8 (YW)) interacts with glutathione. 2 positions are modified to phosphoserine: S27 and S44. Residues 43-46 (RSQW), K50, 59-60 (NL), and 72-73 (QS) each bind glutathione. A GST C-terminal domain is found at 90 to 208 (TEEERIRVDI…KSSRFLSKPI (119 aa)). Position 116 (Y116) interacts with substrate. The residue at position 117 (S117) is a Phosphoserine.

It belongs to the GST superfamily. Mu family. Homodimer.

It is found in the cytoplasm. The enzyme catalyses RX + glutathione = an S-substituted glutathione + a halide anion + H(+). It carries out the reaction 11(S)-hydroxy-14(S),15(S)-epoxy-(5Z,8Z,12E)-eicosatrienoate + glutathione = (11S,15S)-dihydroxy-14(R)-S-glutathionyl-(5Z,8Z,12E)-eicosatrienoate. In terms of biological role, conjugation of reduced glutathione to a wide number of exogenous and endogenous hydrophobic electrophiles. Participates in the formation of novel hepoxilin regioisomers. This is Glutathione S-transferase Mu 2 from Mus musculus (Mouse).